A 146-amino-acid chain; its full sequence is Pseudoazurin (146 aa).

The first 23 residues, 1–23 (MRNIAIKFAAAGILAMLAAPALA), serve as a signal peptide directing secretion. The 89-residue stretch at 28-116 (VHMLNKGAEG…MGMIALIAVG (89 aa)) folds into the Plastocyanin-like domain. Cu cation is bound by residues histidine 63, cysteine 101, histidine 104, and methionine 109.

The cofactor is Cu cation.

The protein resides in the periplasm. In terms of biological role, this soluble electron transfer copper protein is required for the inactivation of copper-containing nitrite reductase in the presence of oxygen. Serves as a direct electron donor to the nitrite reductase. In Alcaligenes faecalis, this protein is Pseudoazurin.